A 595-amino-acid polypeptide reads, in one-letter code: Elongation factor 4 (595 aa).

Residues 2-184 (ETIRNFSIIA…TITHNIPYPK (183 aa)) enclose the tr-type G domain. Residues 14–19 (DHGKST) and 131–134 (NKID) each bind GTP.

This sequence belongs to the TRAFAC class translation factor GTPase superfamily. Classic translation factor GTPase family. LepA subfamily.

It is found in the cell membrane. It catalyses the reaction GTP + H2O = GDP + phosphate + H(+). Required for accurate and efficient protein synthesis under certain stress conditions. May act as a fidelity factor of the translation reaction, by catalyzing a one-codon backward translocation of tRNAs on improperly translocated ribosomes. Back-translocation proceeds from a post-translocation (POST) complex to a pre-translocation (PRE) complex, thus giving elongation factor G a second chance to translocate the tRNAs correctly. Binds to ribosomes in a GTP-dependent manner. In Buchnera aphidicola subsp. Baizongia pistaciae (strain Bp), this protein is Elongation factor 4.